Here is a 76-residue protein sequence, read N- to C-terminus: Small ribosomal subunit protein bS18 (76 aa).

It belongs to the bacterial ribosomal protein bS18 family. In terms of assembly, part of the 30S ribosomal subunit. Forms a tight heterodimer with protein bS6.

In terms of biological role, binds as a heterodimer with protein bS6 to the central domain of the 16S rRNA, where it helps stabilize the platform of the 30S subunit. The sequence is that of Small ribosomal subunit protein bS18 from Desulfitobacterium hafniense (strain Y51).